Consider the following 227-residue polypeptide: Phosphoribosylformylglycinamidine synthase subunit PurQ (227 aa).

Positions 3–225 (FAVIVFPGSN…LKQWRETYVV (223 aa)) constitute a Glutamine amidotransferase type-1 domain. The active-site Nucleophile is cysteine 86. Catalysis depends on residues histidine 194 and glutamate 196.

As to quaternary structure, part of the FGAM synthase complex composed of 1 PurL, 1 PurQ and 2 PurS subunits.

The protein resides in the cytoplasm. The enzyme catalyses N(2)-formyl-N(1)-(5-phospho-beta-D-ribosyl)glycinamide + L-glutamine + ATP + H2O = 2-formamido-N(1)-(5-O-phospho-beta-D-ribosyl)acetamidine + L-glutamate + ADP + phosphate + H(+). It catalyses the reaction L-glutamine + H2O = L-glutamate + NH4(+). Its pathway is purine metabolism; IMP biosynthesis via de novo pathway; 5-amino-1-(5-phospho-D-ribosyl)imidazole from N(2)-formyl-N(1)-(5-phospho-D-ribosyl)glycinamide: step 1/2. Functionally, part of the phosphoribosylformylglycinamidine synthase complex involved in the purines biosynthetic pathway. Catalyzes the ATP-dependent conversion of formylglycinamide ribonucleotide (FGAR) and glutamine to yield formylglycinamidine ribonucleotide (FGAM) and glutamate. The FGAM synthase complex is composed of three subunits. PurQ produces an ammonia molecule by converting glutamine to glutamate. PurL transfers the ammonia molecule to FGAR to form FGAM in an ATP-dependent manner. PurS interacts with PurQ and PurL and is thought to assist in the transfer of the ammonia molecule from PurQ to PurL. The polypeptide is Phosphoribosylformylglycinamidine synthase subunit PurQ (Bacillus cereus (strain B4264)).